The following is a 311-amino-acid chain: Heparan sulfate glucosamine 3-O-sulfotransferase 1 (311 aa).

The N-terminal stretch at 1–20 (MTLLLLGAVLLVAQPQLVHS) is a signal peptide. Asn52 carries N-linked (GlcNAc...) asparagine glycosylation. 3'-phosphoadenylyl sulfate-binding positions include 68–72 (KGGTR), Arg151, and Ser159. 3 N-linked (GlcNAc...) asparagine glycosylation sites follow: Asn196, Asn246, and Asn253. Residue Tyr259 coordinates 3'-phosphoadenylyl sulfate. Cys260 and Cys269 are oxidised to a cystine. 274–278 (KGRAH) is a binding site for 3'-phosphoadenylyl sulfate.

The protein belongs to the sulfotransferase 1 family.

The protein resides in the golgi apparatus lumen. The enzyme catalyses alpha-D-glucosaminyl-[heparan sulfate](n) + 3'-phosphoadenylyl sulfate = 3-sulfo-alpha-D-glucosaminyl-[heparan sulfate](n) + adenosine 3',5'-bisphosphate + H(+). Its function is as follows. Sulfotransferase that utilizes 3'-phospho-5'-adenylyl sulfate (PAPS) to catalyze the transfer of a sulfo group to position 3 of glucosamine residues in heparan. Catalyzes the rate limiting step in the biosynthesis of heparan sulfate (HSact). This modification is a crucial step in the biosynthesis of anticoagulant heparan sulfate as it completes the structure of the antithrombin pentasaccharide binding site. The protein is Heparan sulfate glucosamine 3-O-sulfotransferase 1 (Hs3st1) of Mus musculus (Mouse).